Reading from the N-terminus, the 144-residue chain is Large ribosomal subunit protein uL15 (144 aa).

The segment at 1-55 (MQLNELKPVAGSRFKRLRKGRGLSSGHGFTSGRGTKGQKAHGKTRLGFEGGQMPL) is disordered. Gly residues predominate over residues 23–35 (LSSGHGFTSGRGT).

This sequence belongs to the universal ribosomal protein uL15 family. Part of the 50S ribosomal subunit.

Its function is as follows. Binds to the 23S rRNA. This is Large ribosomal subunit protein uL15 from Limosilactobacillus fermentum (strain NBRC 3956 / LMG 18251) (Lactobacillus fermentum).